We begin with the raw amino-acid sequence, 303 residues long: Glutathione transport system permease protein GsiD (303 aa).

Helical transmembrane passes span 40–60 (AMTA…ARWI), 105–125 (LAAG…LGLL), 144–164 (LFAF…GSGI), 165–185 (ANVI…LVRG), 222–242 (IVVF…SLSF), and 266–286 (VIAP…VLAF). The 190-residue stretch at 101 to 290 (AQISLAAGVF…LTVLAFNLLG (190 aa)) folds into the ABC transmembrane type-1 domain.

This sequence belongs to the binding-protein-dependent transport system permease family. The complex is composed of two ATP-binding proteins (GsiA), two transmembrane proteins (GsiC and GsiD) and a solute-binding protein (GsiB).

It is found in the cell inner membrane. Functionally, part of the ABC transporter complex GsiABCD involved in glutathione import. Probably responsible for the translocation of the substrate across the membrane. In Escherichia coli O1:K1 / APEC, this protein is Glutathione transport system permease protein GsiD.